Here is a 240-residue protein sequence, read N- to C-terminus: UDP-2,3-diacylglucosamine hydrolase (240 aa).

Mn(2+) contacts are provided by D8, H10, D41, N79, and H114. 79–80 (NR) lines the substrate pocket. The substrate site is built by D122, S160, T164, K167, and H195. Residues H195 and H197 each coordinate Mn(2+).

Belongs to the LpxH family. Requires Mn(2+) as cofactor.

The protein resides in the cell inner membrane. The catalysed reaction is UDP-2-N,3-O-bis[(3R)-3-hydroxytetradecanoyl]-alpha-D-glucosamine + H2O = 2-N,3-O-bis[(3R)-3-hydroxytetradecanoyl]-alpha-D-glucosaminyl 1-phosphate + UMP + 2 H(+). It participates in glycolipid biosynthesis; lipid IV(A) biosynthesis; lipid IV(A) from (3R)-3-hydroxytetradecanoyl-[acyl-carrier-protein] and UDP-N-acetyl-alpha-D-glucosamine: step 4/6. Its function is as follows. Hydrolyzes the pyrophosphate bond of UDP-2,3-diacylglucosamine to yield 2,3-diacylglucosamine 1-phosphate (lipid X) and UMP by catalyzing the attack of water at the alpha-P atom. Involved in the biosynthesis of lipid A, a phosphorylated glycolipid that anchors the lipopolysaccharide to the outer membrane of the cell. The chain is UDP-2,3-diacylglucosamine hydrolase from Pseudomonas aeruginosa (strain UCBPP-PA14).